Reading from the N-terminus, the 374-residue chain is 2-oxoglutarate-Fe(II) type oxidoreductase ppzC (374 aa).

Residues 111-130 form a disordered region; the sequence is KDGPFDSGYRGPGTQRVNPT. The Fe2OG dioxygenase domain maps to 220–330; that stretch reads YPDASLEINF…RVSMPFFWGF (111 aa). Residues H254, D256, and H311 each contribute to the Fe cation site. A 2-oxoglutarate-binding site is contributed by R321.

Belongs to the iron/ascorbate-dependent oxidoreductase family. The cofactor is Fe(2+).

The catalysed reaction is peramine + 2-oxoglutarate + O2 = 8-hydroxyperamine + succinate + CO2. The protein operates within secondary metabolite biosynthesis. 2-oxoglutarate-Fe(II) type oxidoreductase; part of the gene cluster that mediates the biosynthesis of pyrrolopyrazines, secondary metabolites showing insecticidal activity. Within the pathway, ppzC uses peramine as substrate for hydroxylation to yield the novel analog 8-hydroxyperamine. The single multifunctional NRPS ppzA is sufficient to produce peramine via condensation of 1-pyrroline-5-carboxylate and arginine, N-methylation of the alpha-amino group of arginine and reduction of the thioester and the cyclization to form an iminium ion resulting in release from the peptide synthetase. Deprotonation of this intermediate and oxidation of the pyrroline ring would give rise to peramine. In Epichloe species that produce only peramine, the peramine synthetase gene is not localized in a gene cluster, in contrast to Metarhizium species that contain additional pyrrolopyrazine biosynthesis genes. The 2-oxoglutarate-Fe(II) type oxidoreductase ppzC hydroxylates peramine to yield the newly identified compound 8-hydroxyperamine whereas ppzD converts L-proline into trans-4-hydroxy-L-proline, a precursor of peramine biosynthesis. The protein is 2-oxoglutarate-Fe(II) type oxidoreductase ppzC of Metarhizium rileyi (strain RCEF 4871) (Nomuraea rileyi).